The sequence spans 182 residues: Adenine phosphoribosyltransferase (182 aa).

The protein belongs to the purine/pyrimidine phosphoribosyltransferase family. Homodimer.

The protein localises to the cytoplasm. It carries out the reaction AMP + diphosphate = 5-phospho-alpha-D-ribose 1-diphosphate + adenine. The protein operates within purine metabolism; AMP biosynthesis via salvage pathway; AMP from adenine: step 1/1. Catalyzes a salvage reaction resulting in the formation of AMP, that is energically less costly than de novo synthesis. The chain is Adenine phosphoribosyltransferase from Pseudomonas syringae pv. tomato (strain ATCC BAA-871 / DC3000).